A 247-amino-acid chain; its full sequence is C-type lectin domain family 7 member A (247 aa).

The Cytoplasmic portion of the chain corresponds to Met1–Arg44. The ITAM-like motif lies at Tyr15 to Leu18. Residues Leu45–Gly65 form a helical; Signal-anchor for type II membrane protein membrane-spanning segment. The Extracellular portion of the chain corresponds to Thr66–Met247. N-linked (GlcNAc...) asparagine glycosylation occurs at Asn91. Disulfide bonds link Cys120/Cys131, Cys148/Cys241, and Cys220/Cys233. One can recognise a C-type lectin domain in the interval Tyr127 to Glu242. (1,3-beta-D-glucosyl)n is bound at residue Arg146–Ser153. Residues Lys157, Asp159, and Glu163 each coordinate a divalent metal cation. Position 195 (Glu195) interacts with (1,3-beta-D-glucosyl)n. Glu242 provides a ligand contact to a divalent metal cation.

As to quaternary structure, homodimer. Interacts with SYK; participates in leukocyte activation in presence of fungal pathogens. Interacts with CD37; this interaction controls CLEC7A-mediated IL-6 production. In terms of assembly, interacts with RANBP9. Phosphorylated on tyrosine residues in response to beta-glucan binding. As to expression, highly expressed in peripheral blood leukocytes and dendritic cells. Detected in spleen, bone marrow, lung, muscle, stomach and placenta.

It is found in the cell membrane. Its subcellular location is the cytoplasm. In terms of biological role, lectin that functions as a pattern recognizing receptor (PRR) specific for beta-1,3-linked and beta-1,6-linked glucans, which constitute cell wall constituents from pathogenic bacteria and fungi. Necessary for the TLR2-mediated inflammatory response and activation of NF-kappa-B: upon beta-glucan binding, recruits SYK via its ITAM motif and promotes a signaling cascade that activates some CARD domain-BCL10-MALT1 (CBM) signalosomes, leading to the activation of NF-kappa-B and MAP kinase p38 (MAPK11, MAPK12, MAPK13 and/or MAPK14) pathways which stimulate expression of genes encoding pro-inflammatory cytokines and chemokines. Enhances cytokine production in macrophages and dendritic cells. Mediates production of reactive oxygen species in the cell. Mediates phagocytosis of C.albicans conidia. Binds T-cells in a way that does not involve their surface glycans and plays a role in T-cell activation. Stimulates T-cell proliferation. Induces phosphorylation of SCIMP after binding beta-glucans. The protein is C-type lectin domain family 7 member A of Homo sapiens (Human).